Reading from the N-terminus, the 164-residue chain is uncharacterized protein (164 aa).

The first 18 residues, 1–18 (MILILTIIVGFLIYFVTA), serve as a signal peptide directing secretion. Asn88 carries N-linked (GlcNAc...) asparagine; by host glycosylation.

Belongs to the IIV-6 357R family.

This is an uncharacterized protein from Acheta domesticus (House cricket).